The chain runs to 238 residues: Heme oxygenase (238 aa).

His-17 contacts heme b.

The protein belongs to the heme oxygenase family.

It is found in the plastid. The protein resides in the chloroplast. The catalysed reaction is heme b + 3 reduced [NADPH--hemoprotein reductase] + 3 O2 = biliverdin IXalpha + CO + Fe(2+) + 3 oxidized [NADPH--hemoprotein reductase] + 3 H2O + H(+). Its function is as follows. Catalyzes the opening of the heme ring with the release of iron. Key enzyme in the synthesis of the chromophoric part of the photosynthetic antennae. The polypeptide is Heme oxygenase (pbsA) (Pyropia yezoensis (Susabi-nori)).